A 439-amino-acid chain; its full sequence is Enolase 1-1 (439 aa).

Position 85 is a phosphothreonine (threonine 85). The substrate site is built by histidine 159 and glutamate 168. The active-site Proton donor is the glutamate 211. Aspartate 246 provides a ligand contact to Mg(2+). 2 positions are modified to phosphoserine: serine 249 and serine 250. At tyrosine 253 the chain carries Phosphotyrosine. Substrate-binding residues include glutamate 295 and aspartate 320. Mg(2+) contacts are provided by glutamate 295 and aspartate 320. Residue lysine 345 is the Proton acceptor of the active site. Serine 351 carries the phosphoserine modification. The residue at position 353 (threonine 353) is a Phosphothreonine. Serine 355 carries the post-translational modification Phosphoserine. Residues 372–375 (SHRS) and lysine 396 each bind substrate. Serine 421 is modified (phosphoserine).

It belongs to the enolase family. As to quaternary structure, homodimer. Mg(2+) is required as a cofactor.

It localises to the cytoplasm. The catalysed reaction is (2R)-2-phosphoglycerate = phosphoenolpyruvate + H2O. Its pathway is carbohydrate degradation; glycolysis; pyruvate from D-glyceraldehyde 3-phosphate: step 4/5. This is Enolase 1-1 (eno101) from Schizosaccharomyces pombe (strain 972 / ATCC 24843) (Fission yeast).